The sequence spans 424 residues: Endochitinase 1 (424 aa).

The signal sequence occupies residues 1-22; the sequence is MPSLFAQSLAIIATLQATLGLA. Residues 39-402 form the GH18 domain; that stretch reads YVNAVYFTNW…GTSSNKLGGP (364 aa). 3 N-linked (GlcNAc...) asparagine glycosylation sites follow: N74, N78, and N96. Chitin is bound by residues 103 to 104 and 130 to 133; these read GN and GGWT. E172 acts as the Proton donor in catalysis. Residues Y173 and 238–241 contribute to the chitin site; that span reads MAYD. N248 and N347 each carry an N-linked (GlcNAc...) asparagine glycan. A chitin-binding site is contributed by W379. A disordered region spans residues 385 to 412; sequence RQGPDSLIGTSSNKLGGPDTTENLLNYP. A compositionally biased stretch (polar residues) spans 392–408; the sequence is IGTSSNKLGGPDTTENL.

The protein belongs to the glycosyl hydrolase 18 family. Chitinase class V subfamily.

It localises to the secreted. The catalysed reaction is Random endo-hydrolysis of N-acetyl-beta-D-glucosaminide (1-&gt;4)-beta-linkages in chitin and chitodextrins.. Secreted chitinase involved in the degradation of chitin, a component of the cell walls of fungi and exoskeletal elements of some animals (including worms and arthropods). Participates in the infection process and directly acts in the penetration process of the host cuticle. In Metarhizium robertsii (strain ARSEF 23 / ATCC MYA-3075) (Metarhizium anisopliae (strain ARSEF 23)), this protein is Endochitinase 1 (chit1).